Here is a 100-residue protein sequence, read N- to C-terminus: NADH-quinone oxidoreductase subunit K (100 aa).

A run of 3 helical transmembrane segments spans residues 2-22 (IGLS…LMGV), 29-49 (LMLF…FAAI), and 63-83 (FFII…LIVL).

This sequence belongs to the complex I subunit 4L family. NDH-1 is composed of 14 different subunits. Subunits NuoA, H, J, K, L, M, N constitute the membrane sector of the complex.

Its subcellular location is the cell inner membrane. The catalysed reaction is a quinone + NADH + 5 H(+)(in) = a quinol + NAD(+) + 4 H(+)(out). In terms of biological role, NDH-1 shuttles electrons from NADH, via FMN and iron-sulfur (Fe-S) centers, to quinones in the respiratory chain. The immediate electron acceptor for the enzyme in this species is believed to be ubiquinone. Couples the redox reaction to proton translocation (for every two electrons transferred, four hydrogen ions are translocated across the cytoplasmic membrane), and thus conserves the redox energy in a proton gradient. The sequence is that of NADH-quinone oxidoreductase subunit K from Sulfurovum sp. (strain NBC37-1).